The following is a 381-amino-acid chain: E3 ubiquitin-protein ligase ATL15 (381 aa).

The N-terminal stretch at 1 to 23 (MVVMSRVSFYSSFLLLLLEVVVA) is a signal peptide. Residues 40–60 (AIIMIVLVSVFFALGCISVYM) form a helical membrane-spanning segment. Residues 118 to 160 (CPVCLNEFEDDETLRLIPQCCHVFHPGCIDAWLRSQTTCPLCR) form an RING-type; atypical zinc finger.

The protein belongs to the RING-type zinc finger family. ATL subfamily.

The protein localises to the membrane. The catalysed reaction is S-ubiquitinyl-[E2 ubiquitin-conjugating enzyme]-L-cysteine + [acceptor protein]-L-lysine = [E2 ubiquitin-conjugating enzyme]-L-cysteine + N(6)-ubiquitinyl-[acceptor protein]-L-lysine.. It participates in protein modification; protein ubiquitination. Its function is as follows. E3 ubiquitin-protein ligase able to catalyze polyubiquitination with ubiquitin-conjugating enzyme E2 UBC8, UBC10, UBC11, UBC28 and UBC29 in vitro. This chain is E3 ubiquitin-protein ligase ATL15 (ATL15), found in Arabidopsis thaliana (Mouse-ear cress).